We begin with the raw amino-acid sequence, 66 residues long: U-limacoditoxin(59)-Dv128 (66 aa).

The N-terminal stretch at 1–20 (MRHLLVLLLICLSVIAMAQA) is a signal peptide. A 3 X 16 AA tandem repeats of [FI]-G-G-G-L-G-G-A-V-G-G-R-R-R-R-D region spans residues 21–66 (TFGGGLGGAVGGRRRRDIGGGLGGAVGGRRRRDIGGGLGGAVGGKS). A run of 2 repeats spans residues 22-37 (FGGGLGGAVGGRRRRD) and 38-53 (IGGGLGGAVGGRRRRD). Gly-31 carries the glycine amide modification. The propeptide occupies 33–37 (RRRRD). Gly-47 bears the Glycine amide mark. Positions 49 to 53 (RRRRD) are excised as a propeptide. The stretch at 54 to 64 (IGGGLGGAVGG) is one 3; half-length repeat.

It belongs to the limacoditoxin-59 family. As to expression, expressed by the venom secretory cell of the spine. The spine is a cuticular structure containing a single large nucleated venom-secreting cell at its base. It is an independent unit capable of producing, storing and injecting venom. On the back of D.vulnerans caterpillars, spines are grouped together by 50 to 100 to form scoli, of which there are eight in D.vulnerans.

The protein resides in the secreted. Functionally, probable toxin. The sequence is that of U-limacoditoxin(59)-Dv128 from Doratifera vulnerans (Mottled cup moth).